The sequence spans 829 residues: Periplasmic nitrate reductase (829 aa).

The first 30 residues, 1–30 (MNSPRPTPPPFAAAAAGLPILVRASNLVTE), serve as a signal peptide directing secretion. The 4Fe-4S Mo/W bis-MGD-type domain maps to 36–92 (LVWNKAPCRFCGTGCSVMVATRDGQVVATHGDIKAEVNRGINCVKGYFLSKIMYGSD). Residues cysteine 43, cysteine 46, cysteine 50, and cysteine 78 each contribute to the [4Fe-4S] cluster site. Mo-bis(molybdopterin guanine dinucleotide)-binding positions include lysine 80, glutamine 147, asparagine 172, cysteine 176, 209–216 (WGSNMAEM), 240–244 (STFEH), 259–261 (QTD), methionine 370, glutamine 374, asparagine 480, 506–507 (SD), lysine 529, aspartate 556, and 716–725 (TGRVLEHWHT). Residue phenylalanine 792 participates in substrate binding. Residues asparagine 800 and lysine 817 each coordinate Mo-bis(molybdopterin guanine dinucleotide).

Belongs to the prokaryotic molybdopterin-containing oxidoreductase family. NasA/NapA/NarB subfamily. Component of the periplasmic nitrate reductase NapAB complex composed of NapA and NapB. The cofactor is [4Fe-4S] cluster. It depends on Mo-bis(molybdopterin guanine dinucleotide) as a cofactor.

It is found in the periplasm. The enzyme catalyses 2 Fe(II)-[cytochrome] + nitrate + 2 H(+) = 2 Fe(III)-[cytochrome] + nitrite + H2O. Its function is as follows. Catalytic subunit of the periplasmic nitrate reductase complex NapAB. Receives electrons from NapB and catalyzes the reduction of nitrate to nitrite. The chain is Periplasmic nitrate reductase from Pseudomonas aeruginosa (strain ATCC 15692 / DSM 22644 / CIP 104116 / JCM 14847 / LMG 12228 / 1C / PRS 101 / PAO1).